Here is a 521-residue protein sequence, read N- to C-terminus: HTH-type transcriptional regulatory protein TyrR (521 aa).

The ACT domain maps to 2-72 (RLEVFCQDRI…GVTDVRTVPY (71 aa)). One can recognise a PAS domain in the interval 78–120 (EHRVLSALLVAMPEPVFSVDLRTKVELANPAAQNLFNLDENKI). A Sigma-54 factor interaction domain is found at 207-436 (IVAVTPRMRQ…LKNALYRALT (230 aa)). ATP contacts are provided by residues 235 to 242 (GDTGTGKD) and 298 to 307 (ANGGSVLLDE). The segment at residues 489–509 (STRKLAKRLGVSHTAIANKLR) is a DNA-binding region (H-T-H motif).

As to quaternary structure, homodimer. In presence of tyrosine (or high concentrations of phenylalanine or tryptophan) and ATP, it self-associates to form an hexamer.

The protein localises to the cytoplasm. Its function is as follows. Dual transcriptional regulator of the TyrR regulon, which includes a number of genes coding for proteins involved in the biosynthesis or transport of the three aromatic amino acids, phenylalanine, tyrosine and tryptophan. These three aromatic amino acids act as effectors which bind to the TyrR protein to form an active regulatory protein. Acts by binding specifically to TyrR boxes in the promoter region of the target genes. This Enterobacter agglomerans (Erwinia herbicola) protein is HTH-type transcriptional regulatory protein TyrR.